The chain runs to 693 residues: Follicle-stimulating hormone receptor (693 aa).

Residues 1-18 (MFLVFTCSLILLASCSSC) form the signal peptide. Disulfide bonds link C18–C25 and C23–C32. Positions 19 to 46 (QHHTCHCAGRIFICQESKVVQLPRDIPT) constitute an LRRNT domain. The Extracellular segment spans residues 19 to 366 (QHHTCHCAGR…EDIMGYTILR (348 aa)). The N-linked (GlcNAc...) asparagine glycan is linked to N47. LRR repeat units follow at residues 49 to 72 (TELR…LLDL), 73 to 97 (EKIE…LPKL), 98 to 118 (HEIR…AFQH), 119 to 143 (LPSL…KVHS), 144 to 169 (FQKV…MGLS), 170 to 192 (SESV…AFNG), 193 to 216 (TYLD…VFQG), 217 to 240 (ANGP…GLEL), and 241 to 259 (IKKL…PDLS). 2 N-linked (GlcNAc...) asparagine glycosylation sites follow: N191 and N199. Residue N268 is glycosylated (N-linked (GlcNAc...) asparagine). Cystine bridges form between C275–C346, C276–C292, C276–C356, and C292–C338. Residues 367–387 (VLIWFISILAITGNIVVLIIL) traverse the membrane as a helical segment. The Cytoplasmic segment spans residues 388–398 (ISSQYKLTVPR). The chain crosses the membrane as a helical span at residues 399 to 421 (FLMCNLAFADLCIGIYLLFIASV). The Extracellular segment spans residues 422–443 (DIQTKSQYYNYAIDWQTGAGCN). The cysteines at positions 442 and 517 are disulfide-linked. A helical transmembrane segment spans residues 444–465 (AAGFFTVFASELSVYTLTVITL). Topologically, residues 466–485 (ERWHTITYAMQLDRKVRFRH) are cytoplasmic. A helical transmembrane segment spans residues 486-508 (AVIIMIFGWMFAFTVALLPIFGV). Residues 509–528 (SSYMKVSICLPMDIETPFSQ) lie on the Extracellular side of the membrane. Residues 529–550 (AYVIFLLVLNVLAFVIICACYI) form a helical membrane-spanning segment. Over 551–573 (CIYFTVRNPNVISSNSDTKIAKR) the chain is Cytoplasmic. Residues 574–597 (MAILIFTDFLCMAPISFFAISASL) form a helical membrane-spanning segment. Residues 598–608 (KVPLITVSKSK) lie on the Extracellular side of the membrane. A helical transmembrane segment spans residues 609–630 (ILLVLFYPINSCANPFLYAIFT). The Cytoplasmic portion of the chain corresponds to 631–693 (KTFRRDFFIL…YSLVPLNHLN (63 aa)).

Belongs to the G-protein coupled receptor 1 family. FSH/LSH/TSH subfamily. In terms of assembly, homotrimer. Functions as a homotrimer binding the FSH hormone heterodimer composed of CGA and FSHB.

It is found in the cell membrane. Functionally, g protein-coupled receptor for follitropin, the follicle-stimulating hormone. Through cAMP production activates the downstream PI3K-AKT and ERK1/ERK2 signaling pathways. The chain is Follicle-stimulating hormone receptor (FSHR) from Cairina moschata (Muscovy duck).